We begin with the raw amino-acid sequence, 213 residues long: MERIKLAEKIISTCREMNASGLNQGTSGNVSARYTGGMLITPSGIAYSKMTPDMIVFVDDKGKPEAGKIPSSEWLIHLACYKARPELNAVIHTHAVNSTAVAIHNHSIPAIHYMVAVSGTDHIPCIPYYTFGSPELADGVSKGIRESKSLLMQHHGMLAMDVTLEKTLWLAGETETLADLYIKCGGLHHDVPVLSEAEMTIVLEKFKTYGLKA.

The active-site Proton donor/acceptor is the glutamate 73. Co(2+)-binding residues include glutamate 73, histidine 92, histidine 94, and histidine 155.

It belongs to the aldolase class II family. The cofactor is Co(2+).

It carries out the reaction 5-(methylsulfanyl)-D-ribulose 1-phosphate = 2-(methylsulfanyl)acetaldehyde + dihydroxyacetone phosphate. The enzyme catalyses 5-deoxy-D-ribulose 1-phosphate = dihydroxyacetone phosphate + acetaldehyde. Its pathway is amino-acid biosynthesis; L-methionine biosynthesis via salvage pathway. Functionally, uses 5-methylthioribulose-1-phosphate to yield 2-(methylthio)acetaldehyde and dihydroxyacetone phosphate. Can also use 5-deoxyribulose 1-phosphate to yield acetaldehyde and dihydroxyacetone phosphate. Part of a bifunctional DHAP-shunt salvage pathway for SAM by-products. The polypeptide is 5-methylthioribulose-1-phosphate/5-deoxyribulose-1-phosphate aldolase (Escherichia coli O45:K1 (strain S88 / ExPEC)).